A 295-amino-acid polypeptide reads, in one-letter code: Ribosomal RNA small subunit methyltransferase A (295 aa).

S-adenosyl-L-methionine contacts are provided by Asn-31, Leu-33, Gly-58, Glu-79, Asp-104, and Asn-129.

Belongs to the class I-like SAM-binding methyltransferase superfamily. rRNA adenine N(6)-methyltransferase family. RsmA subfamily.

Its subcellular location is the cytoplasm. It catalyses the reaction adenosine(1518)/adenosine(1519) in 16S rRNA + 4 S-adenosyl-L-methionine = N(6)-dimethyladenosine(1518)/N(6)-dimethyladenosine(1519) in 16S rRNA + 4 S-adenosyl-L-homocysteine + 4 H(+). In terms of biological role, specifically dimethylates two adjacent adenosines (A1518 and A1519) in the loop of a conserved hairpin near the 3'-end of 16S rRNA in the 30S particle. May play a critical role in biogenesis of 30S subunits. The chain is Ribosomal RNA small subunit methyltransferase A from Leuconostoc mesenteroides subsp. mesenteroides (strain ATCC 8293 / DSM 20343 / BCRC 11652 / CCM 1803 / JCM 6124 / NCDO 523 / NBRC 100496 / NCIMB 8023 / NCTC 12954 / NRRL B-1118 / 37Y).